Consider the following 155-residue polypeptide: MDPEGMMYGFGVSFGISWAILKLFGREKKGKDRPREDGTQQQPSESKGEAACRDAAYRITGKRFEKIRHKGIVNPDTGRALELDCYSKSLKTAIEYQGRQHYEYVSVFHKGGRQDLRKQHERDCYKRAACQKLGIKLIEVPYTVKDIEGYLRKVL.

The segment covering 28–38 (KKGKDRPREDG) has biased composition (basic and acidic residues). The tract at residues 28–52 (KKGKDRPREDGTQQQPSESKGEAAC) is disordered.

This is an uncharacterized protein from Dryophytes versicolor (chameleon treefrog).